A 117-amino-acid polypeptide reads, in one-letter code: Large ribosomal subunit protein uL22 (117 aa).

It belongs to the universal ribosomal protein uL22 family. In terms of assembly, part of the 50S ribosomal subunit.

Its function is as follows. This protein binds specifically to 23S rRNA; its binding is stimulated by other ribosomal proteins, e.g. L4, L17, and L20. It is important during the early stages of 50S assembly. It makes multiple contacts with different domains of the 23S rRNA in the assembled 50S subunit and ribosome. Functionally, the globular domain of the protein is located near the polypeptide exit tunnel on the outside of the subunit, while an extended beta-hairpin is found that lines the wall of the exit tunnel in the center of the 70S ribosome. The chain is Large ribosomal subunit protein uL22 from Synechococcus elongatus (strain ATCC 33912 / PCC 7942 / FACHB-805) (Anacystis nidulans R2).